The primary structure comprises 159 residues: Phospholipase A2 AP-PLA2-I (159 aa).

The first 19 residues, 1 to 19, serve as a signal peptide directing secretion; sequence MNFLVVIVTTVSLAGAASA. Residues 20 to 23 constitute a propeptide that is removed on maturation; sequence GEIQ. Intrachain disulfides connect Cys51-Cys159, Cys53-Cys69, Cys68-Cys139, Cys75-Cys132, Cys85-Cys125, and Cys110-Cys130. Residues Tyr52, Gly54, and Gly56 each coordinate Ca(2+). His72 is a catalytic residue. Residue Asp73 participates in Ca(2+) binding. Residue Asp133 is part of the active site.

Belongs to the phospholipase A2 family. Group I subfamily. Homodimer. It depends on Ca(2+) as a cofactor. In terms of tissue distribution, expressed by the venom gland.

The protein resides in the secreted. The catalysed reaction is a 1,2-diacyl-sn-glycero-3-phosphocholine + H2O = a 1-acyl-sn-glycero-3-phosphocholine + a fatty acid + H(+). Functionally, starfish phospholipase A2 (PLA2) that has hemorrhagic and capillary permeability-increasing activities and hence is considered to be deeply involved in the local inflammation. Shows hemolytic activity only in the presence of phosphatidylcholine (PC). PLA2 catalyzes the calcium-dependent hydrolysis of the 2-acyl groups in 3-sn-phosphoglycerides. The polypeptide is Phospholipase A2 AP-PLA2-I (Acanthaster planci (Crown-of-thorns starfish)).